The sequence spans 416 residues: Phosphoglycerate kinase (416 aa).

(2R)-3-phosphoglycerate is bound by residues valine 23, aspartate 24, phenylalanine 25, asparagine 26, asparagine 38, arginine 39, serine 62, histidine 63, glycine 65, arginine 66, leucine 121, arginine 122, histidine 169, and arginine 170. Glycine 213 is an ADP binding site. A CDP-binding site is contributed by glycine 213. 2 residues coordinate AMP: alanine 214 and lysine 215. Alanine 214 and lysine 215 together coordinate ATP. Alanine 214 contacts Mg(2+). Aspartate 218 is a CDP binding site. Residue aspartate 218 coordinates Mg(2+). Lysine 219 contributes to the AMP binding site. Lysine 219 provides a ligand contact to ATP. An ADP-binding site is contributed by glycine 237. Residue glycine 237 participates in CDP binding. Positions 238 and 312 each coordinate AMP. Residues glycine 238 and glycine 312 each coordinate ATP. Residues glycine 337 and phenylalanine 342 each contribute to the CDP site. Position 342 (phenylalanine 342) interacts with ADP. Position 343 (glutamate 343) interacts with AMP. Mg(2+) is bound at residue aspartate 374. Threonine 375 provides a ligand contact to ATP.

The protein belongs to the phosphoglycerate kinase family. In terms of assembly, monomer. Mg(2+) is required as a cofactor.

The enzyme catalyses (2R)-3-phosphoglycerate + ATP = (2R)-3-phospho-glyceroyl phosphate + ADP. It participates in carbohydrate degradation; glycolysis; pyruvate from D-glyceraldehyde 3-phosphate: step 2/5. The sequence is that of Phosphoglycerate kinase (PGK) from Plasmodium falciparum (isolate 3D7).